Consider the following 104-residue polypeptide: Large ribosomal subunit protein uL24 (104 aa).

The protein belongs to the universal ribosomal protein uL24 family. In terms of assembly, part of the 50S ribosomal subunit.

One of two assembly initiator proteins, it binds directly to the 5'-end of the 23S rRNA, where it nucleates assembly of the 50S subunit. In terms of biological role, one of the proteins that surrounds the polypeptide exit tunnel on the outside of the subunit. The protein is Large ribosomal subunit protein uL24 of Shewanella sediminis (strain HAW-EB3).